A 429-amino-acid polypeptide reads, in one-letter code: Histidinol dehydrogenase (429 aa).

Y130, Q191, and N214 together coordinate NAD(+). 3 residues coordinate substrate: S237, Q259, and H262. Q259 and H262 together coordinate Zn(2+). Catalysis depends on proton acceptor residues E327 and H328. Substrate is bound by residues H328, D361, E415, and H420. D361 contributes to the Zn(2+) binding site. H420 is a Zn(2+) binding site.

The protein belongs to the histidinol dehydrogenase family. Zn(2+) is required as a cofactor.

It carries out the reaction L-histidinol + 2 NAD(+) + H2O = L-histidine + 2 NADH + 3 H(+). It participates in amino-acid biosynthesis; L-histidine biosynthesis; L-histidine from 5-phospho-alpha-D-ribose 1-diphosphate: step 9/9. In terms of biological role, catalyzes the sequential NAD-dependent oxidations of L-histidinol to L-histidinaldehyde and then to L-histidine. This chain is Histidinol dehydrogenase, found in Nitrobacter winogradskyi (strain ATCC 25391 / DSM 10237 / CIP 104748 / NCIMB 11846 / Nb-255).